Reading from the N-terminus, the 279-residue chain is Cell death abnormality protein 2 (279 aa).

The SH2 domain occupies Phe14–Lys115. The 61-residue stretch at Pro116–Glu176 folds into the SH3 1 domain. The disordered stretch occupies residues Arg181–Leu213. Polar residues predominate over residues Ser202 to Ile211. The SH3 2 domain occupies Gln214–Val277.

The protein belongs to the CRK family. Interacts with ced-5 (via C-terminus which contains a candidate SH3-binding, proline-rich region). Forms a ternary complex with ced-5 and ced-12. Interacts (via SH2 domain) with src-1 (when activated and phosphorylated at 'Tyr-416').

In terms of biological role, required for cell migration and engulfment of cell corpses but not for programmed cell death/apoptosis. Has a role in the migration of the 2 gonadal distal tip cells (DTCs). Plays a role in protecting dopaminergic neurons from oxidative stress-induced degeneration. The protein is Cell death abnormality protein 2 of Caenorhabditis elegans.